The sequence spans 637 residues: Biosynthetic arginine decarboxylase (637 aa).

Lysine 101 carries the N6-(pyridoxal phosphate)lysine modification. Residue phenylalanine 286–tyrosine 296 coordinates substrate.

It belongs to the Orn/Lys/Arg decarboxylase class-II family. SpeA subfamily. Mg(2+) is required as a cofactor. It depends on pyridoxal 5'-phosphate as a cofactor.

The catalysed reaction is L-arginine + H(+) = agmatine + CO2. The protein operates within amine and polyamine biosynthesis; agmatine biosynthesis; agmatine from L-arginine: step 1/1. In terms of biological role, catalyzes the biosynthesis of agmatine from arginine. This Shewanella woodyi (strain ATCC 51908 / MS32) protein is Biosynthetic arginine decarboxylase.